Here is a 425-residue protein sequence, read N- to C-terminus: Intermediate conductance calcium-activated potassium channel protein 4 (425 aa).

The chain crosses the membrane as a helical span at residues 30 to 50 (LVLAGTGIGLMVLHAEMLWFL). Residues 59-79 (LLVKCLITLSTAFLLCLIVVF) traverse the membrane as a helical segment. The chain crosses the membrane as a helical span at residues 105–121 (VAQILLELLVCGVHPVP). Residues 141 to 161 (GFLGEGEALLSLAMLLRLYLV) form a helical membrane-spanning segment. A helical transmembrane segment spans residues 205-225 (LLLGLTLGLWLTTAWVLSVAE). An intramembrane region (pore-forming) is located at residues 239–259 (LWLIPITFLTIGYGDVVPGTL). A helical membrane pass occupies residues 263–283 (IVCLCTGVMGVCCTALLVAVV). The interval 284 to 345 (ARKLEFNKAE…RRHQRKMLAA (62 aa)) is calmodulin-binding. H356 carries the post-translational modification Phosphohistidine.

This sequence belongs to the potassium channel KCNN family. KCa3.1/KCNN4 subfamily. In terms of assembly, homodimer. Homotetramer. Heterotetramer of potassium channel proteins. Interacts with MTMR6; this interaction leads to selective dephosphorylation of PI(3)P in a lipid microdomain adjacent to KCNN4, resulting in a decrease of intermediate conductance calcium-activated potassium channel activity. Interacts (via the C-tail domain) with CALM1; the calmodulin binding is constitutive, does not require calcium and mediates calcium-dependent gating and four calmodulin molecules bind to one channel tetramer. In terms of processing, phosphorylation at His-356 by NDKB activates the intermediate conductance calcium-activated potassium channel activity, and conversely it's dephosphorylation by PHPT1 inhibits this activity.

The protein resides in the cell membrane. It localises to the cell projection. It is found in the ruffle membrane. It catalyses the reaction K(+)(in) = K(+)(out). Its function is as follows. Intermediate conductance calcium-activated potassium channel that mediates the voltage-independent transmembrane transfer of potassium across the cell membrane through a constitutive interaction with calmodulin which binds the intracellular calcium allowing its opening. The current is characterized by a voltage-independent activation, an intracellular calcium concentration increase-dependent activation and a single-channel conductance of about 25 picosiemens. Also presents an inwardly rectifying current, thus reducing its already small outward conductance of potassium ions, which is particularly the case when the membrane potential displays positive values, above + 20 mV. Controls calcium influx during vascular contractility by being responsible of membrane hyperpolarization induced by vasoactive factors in proliferative vascular smooth muscle cell types. Following calcium influx, the consecutive activation of KCNN4 channel leads to a hyperpolarization of the cell membrane potential and hence an increase of the electrical driving force for further calcium influx promoting sustained calcium entry in response to stimulation with chemotactic peptides. Required for maximal calcium influx and proliferation during the reactivation of naive T-cells. Plays a role in the late stages of EGF-induced macropinocytosis through activation by PI(3)P. The polypeptide is Intermediate conductance calcium-activated potassium channel protein 4 (Rattus norvegicus (Rat)).